The primary structure comprises 31 residues: Chassatide C6 (31 aa).

Positions 1 to 31 (GVIPCGESCVFIPCISSVIGCSCKNKVCYRN) form a cross-link, cyclopeptide (Gly-Asn). Disulfide bonds link C5–C21, C9–C23, and C14–C28.

Post-translationally, this is a cyclic peptide. Expressed in fruit, pedicel, root and stem but not in leaf (at protein level).

Probably participates in a plant defense mechanism. This Chassalia chartacea (Chassalia curviflora) protein is Chassatide C6.